Here is a 216-residue protein sequence, read N- to C-terminus: Pyrophosphatase PpaX (216 aa).

Asp-12 serves as the catalytic Nucleophile.

Belongs to the HAD-like hydrolase superfamily. PpaX family. Mg(2+) is required as a cofactor.

It carries out the reaction diphosphate + H2O = 2 phosphate + H(+). Hydrolyzes pyrophosphate formed during P-Ser-HPr dephosphorylation by HPrK/P. Might play a role in controlling the intracellular pyrophosphate pool. This is Pyrophosphatase PpaX from Bacillus velezensis (strain DSM 23117 / BGSC 10A6 / LMG 26770 / FZB42) (Bacillus amyloliquefaciens subsp. plantarum).